Here is a 250-residue protein sequence, read N- to C-terminus: Purine nucleoside phosphorylase BQ2027_MB2173C (250 aa).

Zn(2+)-binding residues include His77, Cys114, and His131.

Belongs to the purine nucleoside phosphorylase YfiH/LACC1 family. As to quaternary structure, homodimer. Requires Cu(2+) as cofactor. Zn(2+) is required as a cofactor.

It catalyses the reaction adenosine + phosphate = alpha-D-ribose 1-phosphate + adenine. It carries out the reaction S-methyl-5'-thioadenosine + phosphate = 5-(methylsulfanyl)-alpha-D-ribose 1-phosphate + adenine. The enzyme catalyses inosine + phosphate = alpha-D-ribose 1-phosphate + hypoxanthine. The catalysed reaction is adenosine + H2O + H(+) = inosine + NH4(+). In terms of biological role, purine nucleoside enzyme that catalyzes the phosphorolysis of adenosine and inosine nucleosides, yielding D-ribose 1-phosphate and the respective free bases, adenine and hypoxanthine. Also catalyzes the phosphorolysis of S-methyl-5'-thioadenosine into adenine and S-methyl-5-thio-alpha-D-ribose 1-phosphate. Also has adenosine deaminase activity. This chain is Purine nucleoside phosphorylase BQ2027_MB2173C, found in Mycobacterium bovis (strain ATCC BAA-935 / AF2122/97).